The primary structure comprises 535 residues: Dual specificity calcium/calmodulin-dependent 3',5'-cyclic nucleotide phosphodiesterase 1A (535 aa).

Calmodulin-binding regions lie at residues 24-44 (TEKM…QLER) and 114-137 (EKPK…MYRK). A PDEase domain is found at 142-522 (VGLAYPAAVI…ERWKELAAQE (381 aa)). The active-site Proton donor is the H219. 4 residues coordinate Zn(2+): H223, H259, D260, and D366. Mg(2+) is bound at residue D260.

The protein belongs to the cyclic nucleotide phosphodiesterase family. PDE1 subfamily. Homodimer. Interacts with YWHAZ. It depends on Zn(2+) as a cofactor. The cofactor is Mg(2+). Several tissues, including brain, kidney, testes and heart.

The catalysed reaction is a nucleoside 3',5'-cyclic phosphate + H2O = a nucleoside 5'-phosphate + H(+). The enzyme catalyses 3',5'-cyclic GMP + H2O = GMP + H(+). It carries out the reaction 3',5'-cyclic AMP + H2O = AMP + H(+). With respect to regulation, type I PDE are activated by the binding of calmodulin in the presence of Ca(2+). Calcium/calmodulin-dependent cyclic nucleotide phosphodiesterase with a dual specificity for the second messengers cGMP and cAMP, which are key regulators of many important physiological processes. Has a higher efficiency with cGMP compared to cAMP. The polypeptide is Dual specificity calcium/calmodulin-dependent 3',5'-cyclic nucleotide phosphodiesterase 1A (Homo sapiens (Human)).